The primary structure comprises 489 residues: Beta-1,3-glucosyltransferase (489 aa).

Met-1 is a topological domain (cytoplasmic). A helical; Signal-anchor for type II membrane protein membrane pass occupies residues 2–22 (RPPALLALFSCSAAFALMSEE). Residues 23 to 489 (IKEKVTPSQD…ETQKDPREEL (467 aa)) are Lumenal-facing. An N-linked (GlcNAc...) asparagine glycan is attached at Asn-78. The Prevents secretion from ER signature appears at 486 to 489 (REEL).

This sequence belongs to the glycosyltransferase 31 family.

The protein resides in the endoplasmic reticulum membrane. It functions in the pathway protein modification; protein glycosylation. In terms of biological role, O-glucosyltransferase that transfers glucose toward fucose with a beta-1,3 linkage. Specifically glucosylates O-linked fucosylglycan on TSP type-1 domains of proteins, thereby contributing to elongation of O-fucosylglycan. This is Beta-1,3-glucosyltransferase from Mus musculus (Mouse).